Reading from the N-terminus, the 427-residue chain is Large ribosomal subunit protein uL4 (427 aa).

At Ala-2 the chain carries N-acetylalanine. At Lys-14 the chain carries N6-acetyllysine. Arg-97 is subject to Omega-N-methylarginine. Position 106 is an N6-acetyllysine (Lys-106). Residue Lys-239 forms a Glycyl lysine isopeptide (Lys-Gly) (interchain with G-Cter in SUMO2) linkage. Lys-259 is modified (N6-acetyllysine). Thr-266 bears the Phosphothreonine mark. 2 positions are modified to phosphoserine: Ser-290 and Ser-295. Position 300 is a citrulline (Arg-300). Lys-327 is covalently cross-linked (Glycyl lysine isopeptide (Lys-Gly) (interchain with G-Cter in SUMO2)). 2 positions are modified to N6-acetyllysine: Lys-333 and Lys-353. The residue at position 364 (Lys-364) is an N6-acetyllysine; alternate. Lys-364 participates in a covalent cross-link: Glycyl lysine isopeptide (Lys-Gly) (interchain with G-Cter in SUMO1); alternate. Ser-365 carries the phosphoserine modification. Residues 369–427 (AAVAGKKPVVGKKGKKVAVGVKKQKKPLVGKKAAATKKPAPEKKSTEKKPTTEEKKPAA) form a disordered region. Over residues 377 to 397 (VVGKKGKKVAVGVKKQKKPLV) the composition is skewed to basic residues. The segment covering 407 to 427 (PAPEKKSTEKKPTTEEKKPAA) has biased composition (basic and acidic residues).

This sequence belongs to the universal ribosomal protein uL4 family. As to quaternary structure, component of the large ribosomal subunit. May bind IPO9 with low affinity. Interacts with RBM3. In terms of processing, citrullinated by PADI4.

It is found in the cytoplasm. Component of the large ribosomal subunit. The ribosome is a large ribonucleoprotein complex responsible for the synthesis of proteins in the cell. This is Large ribosomal subunit protein uL4 (RPL4) from Macaca fascicularis (Crab-eating macaque).